The sequence spans 861 residues: Seed linoleate 9S-lipoxygenase-3 (861 aa).

The PLAT domain maps to 41–166; it reads QGFDILGSTV…HHKIDRIFFA (126 aa). The Lipoxygenase domain maps to 169–861; that stretch reads TYLPSETPAP…FRGIPNSISI (693 aa). Residues 215-257 form a disordered region; the sequence is NPDSGENHARPVLGGSETYPYPRRGRTGRKPTRKDPNSESRSD. The span at 237–246 shows a compositional bias: basic residues; that stretch reads RRGRTGRKPT. A compositionally biased stretch (basic and acidic residues) spans 247-257; it reads RKDPNSESRSD. The Fe cation site is built by His-522, His-527, His-713, Asn-717, and Ile-861.

This sequence belongs to the lipoxygenase family. It depends on Fe cation as a cofactor.

It localises to the cytoplasm. The enzyme catalyses (9Z,12Z)-octadecadienoate + O2 = (9S)-hydroperoxy-(10E,12Z)-octadecadienoate. It functions in the pathway lipid metabolism; oxylipin biosynthesis. Its function is as follows. Plant lipoxygenase may be involved in a number of diverse aspects of plant physiology including growth and development, pest resistance, and senescence or responses to wounding. It catalyzes the hydroperoxidation of lipids containing a cis,cis-1,4-pentadiene structure. The chain is Seed linoleate 9S-lipoxygenase-3 (LOX1.3) from Pisum sativum (Garden pea).